The chain runs to 208 residues: Probable nicotinate-nucleotide adenylyltransferase (208 aa).

This sequence belongs to the NadD family.

The catalysed reaction is nicotinate beta-D-ribonucleotide + ATP + H(+) = deamido-NAD(+) + diphosphate. The protein operates within cofactor biosynthesis; NAD(+) biosynthesis; deamido-NAD(+) from nicotinate D-ribonucleotide: step 1/1. Its function is as follows. Catalyzes the reversible adenylation of nicotinate mononucleotide (NaMN) to nicotinic acid adenine dinucleotide (NaAD). In Acidothermus cellulolyticus (strain ATCC 43068 / DSM 8971 / 11B), this protein is Probable nicotinate-nucleotide adenylyltransferase.